The sequence spans 240 residues: MNTLFISDLHLHSSRPQITRAFFDFLRQQTHHTQALYILGDFFDAWIGDDDDDPLPNAVAEQLKKLNSAGVAIFLMHGNRDFLLGNSYAQRAGATLIAEGTVIDLYGRPALLLHGDDLCTLDTDYMAFRQQVRNPDWQAQLLAQPLAARRALAAQLRAQSQAINNMKAESIMDVTPDEVVRVMEEAGVDLLIHGHTHRPARHPLTVQGRPAERIVLGDWHHQGWCLDASATGLALRNWDI.

Mn(2+)-binding residues include aspartate 8, histidine 10, aspartate 41, asparagine 79, and histidine 114. 79–80 lines the substrate pocket; sequence NR. Substrate is bound by residues aspartate 122, serine 160, asparagine 164, lysine 167, and histidine 195. Histidine 195 and histidine 197 together coordinate Mn(2+).

It belongs to the LpxH family. Requires Mn(2+) as cofactor.

It is found in the cell inner membrane. The catalysed reaction is UDP-2-N,3-O-bis[(3R)-3-hydroxytetradecanoyl]-alpha-D-glucosamine + H2O = 2-N,3-O-bis[(3R)-3-hydroxytetradecanoyl]-alpha-D-glucosaminyl 1-phosphate + UMP + 2 H(+). Its pathway is glycolipid biosynthesis; lipid IV(A) biosynthesis; lipid IV(A) from (3R)-3-hydroxytetradecanoyl-[acyl-carrier-protein] and UDP-N-acetyl-alpha-D-glucosamine: step 4/6. In terms of biological role, hydrolyzes the pyrophosphate bond of UDP-2,3-diacylglucosamine to yield 2,3-diacylglucosamine 1-phosphate (lipid X) and UMP by catalyzing the attack of water at the alpha-P atom. Involved in the biosynthesis of lipid A, a phosphorylated glycolipid that anchors the lipopolysaccharide to the outer membrane of the cell. The sequence is that of UDP-2,3-diacylglucosamine hydrolase from Cellvibrio japonicus (strain Ueda107) (Pseudomonas fluorescens subsp. cellulosa).